A 638-amino-acid polypeptide reads, in one-letter code: MSDKSELKAELERKKQRLAQIREEKKRKEEERKKKETDQKKEAAVSVQEESDLEKKRREAEALLQSMGLTTDSPIVFSEHWVPPPMSPSSKSVSTPSEAGSQDSGDGAVGSRTLHWDTDPSALQLHSDSDLGRGPIKLGMAKITQVDFPPREIVTYTKETQTPVTAQPKEDEEEEDDVAAPKPPVEPEEEKILKKDEENDSKAPPHELTEEEKQQILHSEEFLSFFDHSTRIVERALSEQINIFFDYSGRDLEDKEGEIQAGAKLSLNRQFFDERWSKHRVVSCLDWSSQYPELLVASYNNNEEAPHEPDGVALVWNMKYKKTTPEYVFHCQSAVMSATFAKFHPNLVVGGTYSGQIVLWDNRSNKRTPVQRTPLSAAAHTHPVYCVNVVGTQNAHNLISISTDGKICSWSLDMLSHPQDSMELVHKQSKAVAVTSMSFPVGDVNNFVVGSEEGSVYTACRHGSKAGISEMFEGHQGPITGIHCHAAVGAVDFSHLFVTSSFDWTVKLWSTKNNKPLYSFEDNSDYVYDVIGSPTHPALFACVDGMGRLDLWNLNNDTEVPTASISVEGNPALNRVRWTHSGREIAVGDSEGQIVIYDVGEQIAVPRNDEWARFGRTLAEINASRADAEEEAATRIPA.

2 stretches are compositionally biased toward basic and acidic residues: residues 1-13 (MSDK…ELER) and 20-43 (QIRE…KKEA). 2 disordered regions span residues 1-135 (MSDK…GRGP) and 154-209 (VTYT…HELT). Serine 2 carries the post-translational modification N-acetylserine. Serine 51 bears the Diphosphoserine mark. Serine 51 and serine 90 each carry phosphoserine. A compositionally biased stretch (low complexity) spans 88 to 97 (PSSKSVSTPS). Phosphothreonine is present on threonine 95. Phosphoserine is present on residues serine 97, serine 101, and serine 104. Positions 133 to 165 (RGPIKLGMAKITQVDFPPREIVTYTKETQTPVT) are interaction with DYNLT1. Over residues 190-209 (EKILKKDEENDSKAPPHELT) the composition is skewed to basic and acidic residues. WD repeat units lie at residues 277-326 (SKHR…TTPE), 330-370 (HCQS…RTPV), 379-420 (AHTH…HPQD), 429-469 (SKAV…AGIS), 474-519 (GHQG…PLYS), and 568-607 (EGNP…AVPR).

It belongs to the dynein intermediate chain family. As to quaternary structure, homodimer. The cytoplasmic dynein 1 complex consists of two catalytic heavy chains (HCs) and a number of non-catalytic subunits presented by intermediate chains (ICs), light intermediate chains (LICs) and light chains (LCs); the composition seems to vary in respect to the IC, LIC and LC composition. The heavy chain homodimer serves as a scaffold for the probable homodimeric assembly of the respective non-catalytic subunits. The ICs and LICs bind directly to the HC dimer and the LCs assemble on the IC dimer. Interacts with DYNLT3. Interacts with DYNLT1. Interacts (dephosphorylated at Ser-90) with DCTN1. Interacts with BICD2. Interacts with SPEF2. Interacts with CFAP61. Post-translationally, the phosphorylation status of Ser-90 appears to be involved in dynactin-dependent target binding. In terms of processing, pyrophosphorylation by 5-diphosphoinositol pentakisphosphate (5-IP7) promotes interaction with DCTN1. Serine pyrophosphorylation is achieved by Mg(2+)-dependent, but enzyme independent transfer of a beta-phosphate from a inositol pyrophosphate to a pre-phosphorylated serine residue. In terms of tissue distribution, skeletal muscle, testis, kidney, brain, heart and spleen.

It is found in the cytoplasm. The protein localises to the cytoskeleton. Functionally, acts as one of several non-catalytic accessory components of the cytoplasmic dynein 1 complex that are thought to be involved in linking dynein to cargos and to adapter proteins that regulate dynein function. Cytoplasmic dynein 1 acts as a motor for the intracellular retrograde motility of vesicles and organelles along microtubules. The intermediate chains mediate the binding of dynein to dynactin via its 150 kDa component (p150-glued) DCTN1. Involved in membrane-transport, such as Golgi apparatus, late endosomes and lysosomes. The polypeptide is Cytoplasmic dynein 1 intermediate chain 2 (Dync1i2) (Rattus norvegicus (Rat)).